Consider the following 1555-residue polypeptide: Protein TASOR (1555 aa).

5 disordered regions span residues 1 to 74 (MEEN…DKRA), 645 to 711 (QKKK…RQET), 744 to 773 (QNSTEELPSQKLKNLSQAHDTEREGAGQDQ), 870 to 911 (ALPN…TTPS), and 1390 to 1462 (NQGD…PTLD). Positions 35–47 (VQQTLKRTNSTES) are enriched in polar residues. Residues 61-71 (RRFQIPRKSRD) show a composition bias toward basic residues. The segment covering 667 to 688 (DRQSEKAWKHRKCEENVHHDNE) has biased composition (basic and acidic residues). 2 stretches are compositionally biased toward polar residues: residues 692-702 (SAQSLISSLGG) and 744-761 (QNSTEELPSQKLKNLSQA). The span at 888–904 (PLHETERQRPRHDRDYC) shows a compositional bias: basic and acidic residues. Residues 1402–1417 (SKEEEDMSLDSEDDTP) are compositionally biased toward acidic residues. Polar residues predominate over residues 1448–1458 (ESPSTLNQGKT).

The protein belongs to the TASOR family. As to quaternary structure, component of the HUSH complex.

The protein resides in the nucleus. It localises to the chromosome. Functionally, component of the HUSH complex, a multiprotein complex that mediates epigenetic repression. The HUSH complex is recruited to genomic loci rich in H3K9me3 and is probably required to maintain transcriptional silencing by promoting further deposition of H3K9me3. In Xenopus laevis (African clawed frog), this protein is Protein TASOR.